Reading from the N-terminus, the 94-residue chain is DNA-directed RNA polymerase subunit omega (94 aa).

It belongs to the RNA polymerase subunit omega family. As to quaternary structure, the RNAP catalytic core consists of 2 alpha, 1 beta, 1 beta' and 1 omega subunit. When a sigma factor is associated with the core the holoenzyme is formed, which can initiate transcription.

The enzyme catalyses RNA(n) + a ribonucleoside 5'-triphosphate = RNA(n+1) + diphosphate. Its function is as follows. Promotes RNA polymerase assembly. Latches the N- and C-terminal regions of the beta' subunit thereby facilitating its interaction with the beta and alpha subunits. The chain is DNA-directed RNA polymerase subunit omega from Frankia casuarinae (strain DSM 45818 / CECT 9043 / HFP020203 / CcI3).